Consider the following 254-residue polypeptide: Ribosomal RNA small subunit methyltransferase J (254 aa).

Residues 106-107 (RD) and aspartate 177 each bind S-adenosyl-L-methionine.

It belongs to the methyltransferase superfamily. RsmJ family.

It is found in the cytoplasm. It carries out the reaction guanosine(1516) in 16S rRNA + S-adenosyl-L-methionine = N(2)-methylguanosine(1516) in 16S rRNA + S-adenosyl-L-homocysteine + H(+). Specifically methylates the guanosine in position 1516 of 16S rRNA. The sequence is that of Ribosomal RNA small subunit methyltransferase J from Nitrosococcus oceani (strain ATCC 19707 / BCRC 17464 / JCM 30415 / NCIMB 11848 / C-107).